A 362-amino-acid chain; its full sequence is Fe-S cluster assembly protein DRE2 (362 aa).

The interval 1 to 28 is disordered; the sequence is MAPGLDLTPDFHPPTTTTTTTNNAPPQQ. Positions 15–28 are enriched in low complexity; it reads TTTTTTTNNAPPQQ. Positions 24 to 165 are N-terminal SAM-like domain; that stretch reads APPQQRTLLL…KPEYAEEEAV (142 aa). The segment at 166-254 is linker; sequence PLRFGKKKAA…EETLLTEEDL (89 aa). 4 residues coordinate [2Fe-2S] cluster: cysteine 264, cysteine 275, cysteine 278, and cysteine 280. A fe-S binding site A region spans residues 264 to 280; it reads CQPQPGKKRRACKDCTC. Residues cysteine 325, cysteine 328, cysteine 336, and cysteine 339 each contribute to the [4Fe-4S] cluster site. 2 consecutive short sequence motifs (cx2C motif) follow at residues 325–328 and 336–339; these read CGSC and CSDC. The interval 325 to 339 is fe-S binding site B; it reads CGSCYLGDAFRCSDC.

This sequence belongs to the anamorsin family. Monomer. Interacts with TAH18. Interacts with MIA40. [2Fe-2S] cluster serves as cofactor. It depends on [4Fe-4S] cluster as a cofactor.

The protein resides in the cytoplasm. Its subcellular location is the mitochondrion intermembrane space. Functionally, component of the cytosolic iron-sulfur (Fe-S) protein assembly (CIA) machinery required for the maturation of extramitochondrial Fe-S proteins. Part of an electron transfer chain functioning in an early step of cytosolic Fe-S biogenesis, facilitating the de novo assembly of a [4Fe-4S] cluster on the scaffold complex CFD1-NBP35. Electrons are transferred to DRE2 from NADPH via the FAD- and FMN-containing protein TAH18. TAH18-DRE2 are also required for the assembly of the diferric tyrosyl radical cofactor of ribonucleotide reductase (RNR), probably by providing electrons for reduction during radical cofactor maturation in the catalytic small subunit RNR2. The protein is Fe-S cluster assembly protein DRE2 of Chaetomium globosum (strain ATCC 6205 / CBS 148.51 / DSM 1962 / NBRC 6347 / NRRL 1970) (Soil fungus).